A 427-amino-acid chain; its full sequence is NADH-quinone oxidoreductase subunit 14 (427 aa).

A run of 14 helical transmembrane segments spans residues 1 to 21, 30 to 50, 57 to 77, 79 to 99, 104 to 124, 137 to 157, 172 to 192, 204 to 224, 230 to 250, 257 to 277, 280 to 300, 322 to 342, 360 to 380, and 400 to 420; these read MTLAILAVFSVALTLLGFVLP, LLGLALALASLLLTWGKPFAF, GVSQVFTLLALLGALWTVGLV, SGRFEFYLLVLYAALGMHLLA, LLLMLVALEALSLPLYALATW, FLLGALAAAFFLYGAALFYGA, YALALGLLLVGLGFKAALAPF, PTPVVLFMATSVKAAAFAALL, PEALALLVALSVVVGNLAALA, LLAYSSIAHAGYMALALYTGN, ALGFYLLTYVLATGLAFAVLS, LGLAFLVAMLSLLGLPPLAGF, VLVLALVTSAVSAYYYLGLGL, and AAVVAAGVLLLALGLLPGLVL.

The protein belongs to the complex I subunit 2 family. As to quaternary structure, NDH-1 is composed of 15 different subunits, Nqo1 to Nqo15. The complex has a L-shaped structure, with the hydrophobic arm (subunits Nqo7, Nqo8 and Nqo10 to Nqo14) embedded in the membrane and the hydrophilic peripheral arm (subunits Nqo1 to Nqo6, Nqo9 and Nqo15) protruding into the bacterial cytoplasm. The hydrophilic domain contains all the redox centers.

The protein localises to the cell inner membrane. It catalyses the reaction a quinone + NADH + 5 H(+)(in) = a quinol + NAD(+) + 4 H(+)(out). In terms of biological role, NDH-1 shuttles electrons from NADH, via FMN and iron-sulfur (Fe-S) centers, to quinones in the respiratory chain. The immediate electron acceptor for the enzyme in this species is menaquinone. Couples the redox reaction to proton translocation (for every two electrons transferred, four hydrogen ions are translocated across the cytoplasmic membrane), and thus conserves the redox energy in a proton gradient required for the synthesis of ATP. This is NADH-quinone oxidoreductase subunit 14 (nqo14) from Thermus thermophilus (strain ATCC 27634 / DSM 579 / HB8).